A 559-amino-acid chain; its full sequence is Poly(U)-binding-splicing factor PUF60 (559 aa).

An inhibits homodimerization region spans residues 1 to 516; the sequence is MATATIALQV…EDAEIIVKIF (516 aa). Residues glutamine 14 and lysine 43 each participate in a glycyl lysine isopeptide (Lys-Gly) (interchain with G-Cter in SUMO2) cross-link. Threonine 60 bears the Phosphothreonine mark. The tract at residues 77–559 is inhibits transcriptional repression, interaction with ERCC3 and apoptosis induction; it reads QSIKSVLVKQ…ERFDNSDLSA (483 aa). A Glycyl lysine isopeptide (Lys-Gly) (interchain with G-Cter in SUMO2) cross-link involves residue lysine 80. Serine 112 is modified (phosphoserine). RRM domains follow at residues 129-207 and 226-304; these read CRVY…RPSN and NRIY…KAVT. Serine 244 carries the post-translational modification Phosphoserine. Lysine 251 carries the post-translational modification N6-acetyllysine. Threonine 314 bears the Phosphothreonine mark. The disordered stretch occupies residues 416–437; sequence KKEKEEEELFPESERPEMLSEQ. Residue lysine 419 forms a Glycyl lysine isopeptide (Lys-Gly) (interchain with G-Cter in SUMO2) linkage. Basic and acidic residues predominate over residues 427–437; that stretch reads ESERPEMLSEQ. Lysine 454 carries the N6-acetyllysine modification. Residue lysine 458 forms a Glycyl lysine isopeptide (Lys-Gly) (interchain with G-Cter in SUMO2) linkage. An RRM 3; atypical domain is found at 462–549; sequence TVMVLRNMVD…RKVVAEVYDQ (88 aa).

This sequence belongs to the RRM half pint family. As to quaternary structure, homodimer. Associates with the spliceosome. Found in a complex with RO60 and Y5 RNA. Found in a complex with FUBP1 and far upstream element (FUSE) DNA segment. Interacts directly with ERCC3. Interacts with CDK7 and GTF2H1. Interacts with SRSF11/P54. Does not interact with ERCC3 in xeroderma pigmentosum complementation group B (XPB) cells. Interacts with ARGLU1; interaction may be involved in ARGLU1-mediated modulation of alternative splicing. As to expression, isoform 2 is expressed in colonic epithelium and colorectal epithelium cancer (at protein level). Isoform 6 is expressed in colorectal epithelial cancer but below detection level in colonic epithelium. Expressed in heart, brain, placenta, lung, liver, skeletal muscle, kidney, pancreas, spleen, thymus, prostate, testis, ovary, small intestine, colon and peripheral blood leukocytes.

The protein resides in the nucleus. Its function is as follows. DNA- and RNA-binding protein, involved in several nuclear processes such as pre-mRNA splicing, apoptosis and transcription regulation. In association with FUBP1 regulates MYC transcription at the P2 promoter through the core-TFIIH basal transcription factor. Acts as a transcriptional repressor through the core-TFIIH basal transcription factor. Represses FUBP1-induced transcriptional activation but not basal transcription. Decreases ERCC3 helicase activity. Does not repress TFIIH-mediated transcription in xeroderma pigmentosum complementation group B (XPB) cells. Is also involved in pre-mRNA splicing. Promotes splicing of an intron with weak 3'-splice site and pyrimidine tract in a cooperative manner with U2AF2. Involved in apoptosis induction when overexpressed in HeLa cells. Isoform 6 failed to repress MYC transcription and inhibited FIR-induced apoptosis in colorectal cancer. Isoform 6 may contribute to tumor progression by enabling increased MYC expression and greater resistance to apoptosis in tumors than in normal cells. Modulates alternative splicing of several mRNAs. Binds to relaxed DNA of active promoter regions. Binds to the pyrimidine tract and 3'-splice site regions of pre-mRNA; binding is enhanced in presence of U2AF2. Binds to Y5 RNA in association with RO60. Binds to poly(U) RNA. The sequence is that of Poly(U)-binding-splicing factor PUF60 from Homo sapiens (Human).